The following is a 173-amino-acid chain: Crossover junction endodeoxyribonuclease RuvC (173 aa).

Catalysis depends on residues aspartate 8, glutamate 67, and aspartate 139. Positions 8, 67, and 139 each coordinate Mg(2+).

Belongs to the RuvC family. In terms of assembly, homodimer which binds Holliday junction (HJ) DNA. The HJ becomes 2-fold symmetrical on binding to RuvC with unstacked arms; it has a different conformation from HJ DNA in complex with RuvA. In the full resolvosome a probable DNA-RuvA(4)-RuvB(12)-RuvC(2) complex forms which resolves the HJ. It depends on Mg(2+) as a cofactor.

It localises to the cytoplasm. The catalysed reaction is Endonucleolytic cleavage at a junction such as a reciprocal single-stranded crossover between two homologous DNA duplexes (Holliday junction).. The RuvA-RuvB-RuvC complex processes Holliday junction (HJ) DNA during genetic recombination and DNA repair. Endonuclease that resolves HJ intermediates. Cleaves cruciform DNA by making single-stranded nicks across the HJ at symmetrical positions within the homologous arms, yielding a 5'-phosphate and a 3'-hydroxyl group; requires a central core of homology in the junction. The consensus cleavage sequence is 5'-(A/T)TT(C/G)-3'. Cleavage occurs on the 3'-side of the TT dinucleotide at the point of strand exchange. HJ branch migration catalyzed by RuvA-RuvB allows RuvC to scan DNA until it finds its consensus sequence, where it cleaves and resolves the cruciform DNA. The sequence is that of Crossover junction endodeoxyribonuclease RuvC from Shewanella sp. (strain ANA-3).